Consider the following 308-residue polypeptide: UDP-N-acetylenolpyruvoylglucosamine reductase (308 aa).

One can recognise an FAD-binding PCMH-type domain in the interval 37–201 (RVGGPAQVLF…TQATFRGTPG (165 aa)). Arginine 181 is a catalytic residue. Over residues 216-233 (SREATQPIKSRTGGSTFK) the composition is skewed to polar residues. The disordered stretch occupies residues 216-236 (SREATQPIKSRTGGSTFKNPP). Catalysis depends on serine 230, which acts as the Proton donor. Glutamate 300 is an active-site residue.

Belongs to the MurB family. It depends on FAD as a cofactor.

Its subcellular location is the cytoplasm. It catalyses the reaction UDP-N-acetyl-alpha-D-muramate + NADP(+) = UDP-N-acetyl-3-O-(1-carboxyvinyl)-alpha-D-glucosamine + NADPH + H(+). The protein operates within cell wall biogenesis; peptidoglycan biosynthesis. Cell wall formation. This chain is UDP-N-acetylenolpyruvoylglucosamine reductase, found in Azorhizobium caulinodans (strain ATCC 43989 / DSM 5975 / JCM 20966 / LMG 6465 / NBRC 14845 / NCIMB 13405 / ORS 571).